The primary structure comprises 1227 residues: Codanin-1 (1227 aa).

Alanine 2 bears the N-acetylalanine mark. A disordered region spans residues 63–294 (RVLPQGPPTP…SLTDEPADPA (232 aa)). Threonine 71 carries the phosphothreonine modification. A compositionally biased stretch (basic and acidic residues) spans 128 to 137 (ARERGGRGLE). Over residues 155–167 (GSGSPSRPSLTLS) the composition is skewed to low complexity. Positions 188-208 (PTGTKPSRRINPTPVSEERSL) are interaction with ASF1A/B. Residues 214 to 232 (CFTSPPISCVPSSQPSALD) are compositionally biased toward polar residues. Positions 247 to 260 (LQEEREMLRKERSK) are enriched in basic and acidic residues. Residues serine 265 and serine 285 each carry the phosphoserine modification. Helical transmembrane passes span 312-332 (CIAENLVPNLFLELFFVFQLL) and 626-646 (FAVVLLSLRLLAKFLGFVAFL).

As to quaternary structure, found in a cytosolic complex with ASF1A, ASF1B, IPO4 and histones H3.1 and H4. In terms of tissue distribution, ubiquitously expressed. Isoform 3 is not found in erythroid cells.

Its subcellular location is the cytoplasm. The protein resides in the nucleus. The protein localises to the membrane. May act as a negative regulator of ASF1 in chromatin assembly. The polypeptide is Codanin-1 (CDAN1) (Homo sapiens (Human)).